Reading from the N-terminus, the 517-residue chain is Perilipin-1 (517 aa).

Phosphoserine is present on S81. T85 is subject to Phosphothreonine. Residues S126, S130, S132, S137, and S174 each carry the phosphoserine modification. A disordered region spans residues 197-217 (VESAPSSGRQKTQKAPKAKPS). 3 positions are modified to phosphothreonine: T224, T299, and T301. The tract at residues 285-321 (HNLAASKDENHEDQTDTEGEETDEEEEEEESEAEENV) is disordered. The required for interaction with CIDEC stretch occupies residues 291-322 (KDENHEDQTDTEGEETDEEEEEEESEAEENVL). The span at 299–319 (TDTEGEETDEEEEEEESEAEE) shows a compositional bias: acidic residues. 11 positions are modified to phosphoserine: S315, S385, S387, P408, S411, S434, S436, S440, S460, S492, and S494. Residues 415 to 495 (PESEFQDIDN…KPARRVSDSF (81 aa)) form a disordered region. Residues 483 to 492 (PREKPARRVS) are compositionally biased toward basic and acidic residues.

Belongs to the perilipin family. As to quaternary structure, interacts with ABHD5. Interacts with CIDEC. Interacts with AQP7. Post-translationally, major cAMP-dependent protein kinase substrate in adipocytes, also dephosphorylated by PP1. When phosphorylated, may be maximally sensitive to HSL. When unphosphorylated, may play a role in the inhibition of lipolysis, by acting as a barrier in lipid droplet. The N-terminus is blocked. As to expression, adipocytes.

The protein localises to the endoplasmic reticulum. It is found in the lipid droplet. In terms of biological role, modulator of adipocyte lipid metabolism. Coats lipid storage droplets to protect them from breakdown by hormone-sensitive lipase (HSL). Its absence may result in leanness. Plays a role in unilocular lipid droplet formation by activating CIDEC. Their interaction promotes lipid droplet enlargement and directional net neutral lipid transfer. May modulate lipolysis and triglyceride levels. The chain is Perilipin-1 (Plin1) from Rattus norvegicus (Rat).